The chain runs to 346 residues: Dihydroorotase (346 aa).

Residues His17 and His19 each coordinate Zn(2+). Substrate-binding positions include His19–Arg21 and Asn45. Zn(2+)-binding residues include Lys103, His140, and His178. An N6-carboxylysine modification is found at Lys103. Substrate is bound at residue His140. A substrate-binding site is contributed by Leu223. Asp251 serves as a coordination point for Zn(2+). Asp251 is a catalytic residue. Residues His255 and Ala267 each contribute to the substrate site.

The protein belongs to the metallo-dependent hydrolases superfamily. DHOase family. Class II DHOase subfamily. As to quaternary structure, homodimer. The cofactor is Zn(2+).

It catalyses the reaction (S)-dihydroorotate + H2O = N-carbamoyl-L-aspartate + H(+). Its pathway is pyrimidine metabolism; UMP biosynthesis via de novo pathway; (S)-dihydroorotate from bicarbonate: step 3/3. Catalyzes the reversible cyclization of carbamoyl aspartate to dihydroorotate. This chain is Dihydroorotase, found in Synechococcus sp. (strain RCC307).